A 236-amino-acid polypeptide reads, in one-letter code: 2-C-methyl-D-erythritol 4-phosphate cytidylyltransferase (236 aa).

Belongs to the IspD/TarI cytidylyltransferase family. IspD subfamily. As to quaternary structure, homodimer.

The enzyme catalyses 2-C-methyl-D-erythritol 4-phosphate + CTP + H(+) = 4-CDP-2-C-methyl-D-erythritol + diphosphate. It participates in isoprenoid biosynthesis; isopentenyl diphosphate biosynthesis via DXP pathway; isopentenyl diphosphate from 1-deoxy-D-xylulose 5-phosphate: step 2/6. In terms of biological role, catalyzes the formation of 4-diphosphocytidyl-2-C-methyl-D-erythritol from CTP and 2-C-methyl-D-erythritol 4-phosphate (MEP). The chain is 2-C-methyl-D-erythritol 4-phosphate cytidylyltransferase from Escherichia coli O157:H7.